The chain runs to 71 residues: Long neurotoxin 2 (71 aa).

5 disulfides stabilise this stretch: C3–C20, C14–C41, C26–C30, C45–C56, and C57–C62.

The protein belongs to the three-finger toxin family. Long-chain subfamily. Type II alpha-neurotoxin sub-subfamily. As to expression, expressed by the venom gland.

The protein resides in the secreted. In terms of biological role, binds with high affinity to muscular (alpha-1/CHRNA1) and neuronal (alpha-7/CHRNA7) nicotinic acetylcholine receptor (nAChR) and inhibits acetylcholine from binding to the receptor, thereby impairing neuromuscular and neuronal transmission. The protein is Long neurotoxin 2 of Naja naja (Indian cobra).